The sequence spans 199 residues: Securin (199 aa).

Disordered stretches follow at residues 1–23 (MATL…SKDG) and 58–108 (RKAL…DDAY). Ala-2 is subject to N-acetylalanine. The span at 7 to 23 (VDKDNEEPGSRLASKDG) shows a compositional bias: basic and acidic residues. The short motif at 58 to 61 (RKAL) is the D-box element. A TEK-box 1 motif is present at residues 68–70 (TEK). Residues 76-85 (KPLQSKQPTL) show a composition bias toward polar residues. A TEK-box 2 motif is present at residues 91 to 93 (TEK). Ser-162 bears the Phosphoserine mark. Residues 179–192 (PPSALSALDVELPP) carry the SH3-binding motif.

The protein belongs to the securin family. In terms of assembly, interacts with the caspase-like ESPL1, and prevents its protease activity by covering its active site. Interacts with p53/TP53 and blocks its activity probably by blocking its binding to DNA. Interacts with the Ku 70 kDa subunit of ds-DNA kinase. Interacts with PTTG1IP. Interacts with RPS10 and DNAJA1. Post-translationally, phosphorylated at Ser-162 by CDK1 during mitosis. In terms of processing, phosphorylated in vitro by ds-DNA kinase. Ubiquitinated through 'Lys-11' linkage of ubiquitin moieties by the anaphase promoting complex (APC) at the onset of anaphase, conducting to its degradation. 'Lys-11'-linked ubiquitination is mediated by the E2 ligase UBE2C/UBCH10. As to expression, expressed at low level in most tissues, except in adult testis, where it is highly expressed. Expressed in both spermatocytes and spermatids.

The protein localises to the cytoplasm. It is found in the nucleus. Regulatory protein, which plays a central role in chromosome stability, in the p53/TP53 pathway, and DNA repair. Probably acts by blocking the action of key proteins. During the mitosis, it blocks Separase/ESPL1 function, preventing the proteolysis of the cohesin complex and the subsequent segregation of the chromosomes. At the onset of anaphase, it is ubiquitinated, conducting to its destruction and to the liberation of ESPL1. Its function is however not limited to a blocking activity, since it is required to activate ESPL1. Negatively regulates the transcriptional activity and related apoptosis activity of p53/TP53. The negative regulation of p53/TP53 may explain the strong transforming capability of the protein when it is overexpressed. May also play a role in DNA repair via its interaction with Ku, possibly by connecting DNA damage-response pathways with sister chromatid separation. This chain is Securin (Pttg1), found in Rattus norvegicus (Rat).